Reading from the N-terminus, the 244-residue chain is Ubiquinone/menaquinone biosynthesis C-methyltransferase UbiE (244 aa).

S-adenosyl-L-methionine-binding positions include T70, D91, and 117-118 (DA).

The protein belongs to the class I-like SAM-binding methyltransferase superfamily. MenG/UbiE family.

It catalyses the reaction a 2-demethylmenaquinol + S-adenosyl-L-methionine = a menaquinol + S-adenosyl-L-homocysteine + H(+). The enzyme catalyses a 2-methoxy-6-(all-trans-polyprenyl)benzene-1,4-diol + S-adenosyl-L-methionine = a 5-methoxy-2-methyl-3-(all-trans-polyprenyl)benzene-1,4-diol + S-adenosyl-L-homocysteine + H(+). The protein operates within quinol/quinone metabolism; menaquinone biosynthesis; menaquinol from 1,4-dihydroxy-2-naphthoate: step 2/2. Its pathway is cofactor biosynthesis; ubiquinone biosynthesis. Functionally, methyltransferase required for the conversion of demethylmenaquinol (DMKH2) to menaquinol (MKH2) and the conversion of 2-polyprenyl-6-methoxy-1,4-benzoquinol (DDMQH2) to 2-polyprenyl-3-methyl-6-methoxy-1,4-benzoquinol (DMQH2). The polypeptide is Ubiquinone/menaquinone biosynthesis C-methyltransferase UbiE (Chromobacterium violaceum (strain ATCC 12472 / DSM 30191 / JCM 1249 / CCUG 213 / NBRC 12614 / NCIMB 9131 / NCTC 9757 / MK)).